The chain runs to 317 residues: Non-structural protein 2 (317 aa).

ATP is bound by residues 107–109 (SVR), lysine 188, and 221–223 (HGK). Positions 205–241 (LVAELRWQYNRFAVITHGKGHYRVIKYSSVANHADRV) are RNA-binding. Histidine 225 acts as the For NTPase and RTPase activities in catalysis. Arginine 227 lines the ATP pocket.

Belongs to the rotavirus NSP2 family. In terms of assembly, homooctamer. Interacts with VP1; this interaction is weak. Interacts with NSP5; this interaction leads to up-regulation of NSP5 phosphorylation and formation of viral factories. Interacts with host DCP1A, DCP1B, DDX6, EDC4 and EIF2S1/eIF2-alpha; these interactions are probably part of the sequestration of some host SGs and PBs proteins in viral factories. Mg(2+) is required as a cofactor.

The protein resides in the host cytoplasm. In terms of biological role, participates in replication and packaging of the viral genome. Plays a crucial role, together with NSP5, in the formation of virus factories (viroplasms), which are large inclusions in the host cytoplasm where replication intermediates are assembled and viral RNA replication takes place. Displays ssRNA binding, NTPase, RNA triphosphatase (RTPase) and ATP-independent helix-unwinding activities. The unwinding activity may prepare and organize plus-strand RNAs for packaging and replication by removing interfering secondary structures. The RTPase activity plays a role in the removal of the gamma-phosphate from the rotavirus RNA minus strands of dsRNA genome segments. Participates in the selective exclusion of host proteins from stress granules (SG) and P bodies (PB). Also participates in the sequestration of these remodeled organelles in viral factories. The chain is Non-structural protein 2 from Homo sapiens (Human).